Reading from the N-terminus, the 215-residue chain is Adenylate kinase (215 aa).

10–15 (GAGKGT) lines the ATP pocket. Residues 30-59 (STGDMFRAAMKNNTELGRKAKSFMDNGDLV) are NMP. AMP-binding positions include Thr31, Arg36, 57 to 59 (DLV), 85 to 88 (GFPR), and Gln92. The tract at residues 126–163 (GRWICRTCGKTYHEIYNPPKVAGKCDLDGGELYQRDDD) is LID. Position 127 (Arg127) interacts with ATP. Zn(2+)-binding residues include Cys130 and Cys133. 136–137 (TY) provides a ligand contact to ATP. Zn(2+)-binding residues include Cys150 and Asp153. 2 residues coordinate AMP: Arg160 and Arg171. Residue Gln199 participates in ATP binding.

Belongs to the adenylate kinase family. Monomer.

The protein resides in the cytoplasm. It catalyses the reaction AMP + ATP = 2 ADP. Its pathway is purine metabolism; AMP biosynthesis via salvage pathway; AMP from ADP: step 1/1. In terms of biological role, catalyzes the reversible transfer of the terminal phosphate group between ATP and AMP. Plays an important role in cellular energy homeostasis and in adenine nucleotide metabolism. The polypeptide is Adenylate kinase (Listeria monocytogenes serotype 4a (strain HCC23)).